The sequence spans 103 residues: A-type ATP synthase subunit F (103 aa).

This sequence belongs to the V-ATPase F subunit family. In terms of assembly, has multiple subunits with at least A(3), B(3), C, D, E, F, H, I and proteolipid K(x).

It localises to the cell membrane. Functionally, component of the A-type ATP synthase that produces ATP from ADP in the presence of a proton gradient across the membrane. The chain is A-type ATP synthase subunit F from Pyrococcus furiosus (strain ATCC 43587 / DSM 3638 / JCM 8422 / Vc1).